A 492-amino-acid polypeptide reads, in one-letter code: Probable G-protein coupled receptor Mth-like 8 (492 aa).

Residues 1 to 21 form the signal peptide; the sequence is MAQFCILGVLLILSGTHCSWG. At 22 to 218 the chain is on the extracellular side; the sequence is FHEETHYPCA…FVLGVREWTY (197 aa). 4 cysteine pairs are disulfide-bonded: C30-C82, C84-C89, C93-C184, and C94-C107. N-linked (GlcNAc...) asparagine glycosylation is found at N37 and N51. 3 N-linked (GlcNAc...) asparagine glycosylation sites follow: N129, N169, and N192. The chain crosses the membrane as a helical span at residues 219 to 239; sequence AICLLIAILSMFIVLMVYLMC. Topologically, residues 240–245 are cytoplasmic; the sequence is SEMRNS. The helical transmembrane segment at 246–266 threads the bilayer; sequence FYGVAIKAYAICMILGYALLA. Over 267–282 the chain is Extracellular; sequence YLTLHNPANLSNAACR. The N-linked (GlcNAc...) asparagine glycan is linked to N275. A helical membrane pass occupies residues 283 to 303; the sequence is ILPSLALMNLVLSFYILSFIA. The Cytoplasmic segment spans residues 304–317; that stretch reads FKLYLSFYGVVFTK. The chain crosses the membrane as a helical span at residues 318 to 338; it reads LMFWLIFTPIVLVAVGWSFFV. At 339-362 the chain is on the extracellular side; that stretch reads GFSYYGSRLIFGGDTCWFDPRNWS. A glycan (N-linked (GlcNAc...) asparagine) is linked at N360. The chain crosses the membrane as a helical span at residues 363–383; it reads VMIYFYAPVFVACAISGFFYV. Residues 384 to 411 are Cytoplasmic-facing; the sequence is LSQIYIRDQPDIETEKSFESIEKNRFKS. A helical transmembrane segment spans residues 412-432; that stretch reads FWKYFGYTAVVWVVCICSFAF. Residues 433 to 441 lie on the Extracellular side of the membrane; the sequence is NYYWENRSH. N438 carries an N-linked (GlcNAc...) asparagine glycan. A helical transmembrane segment spans residues 442 to 462; sequence LNYAVSFCMAFHGFAALYALI. Residues 463–492 lie on the Cytoplasmic side of the membrane; sequence GKNQQIQNFLRRIDNGEDTCENSVPLSSFG.

This sequence belongs to the G-protein coupled receptor 2 family. Mth subfamily.

It localises to the cell membrane. This is Probable G-protein coupled receptor Mth-like 8 (mthl8) from Drosophila melanogaster (Fruit fly).